The chain runs to 484 residues: Arginine ADP-riboxanase OspC2 (484 aa).

Residues H143, Q144, S145, L149, I162, N172, F188, H206, F211, D231, and E326 each coordinate NAD(+). Residue E326 is part of the active site. 2 ANK repeats span residues 414–444 (LYDVEYLLSEDSANYKVLEYFISNGLVDVNK) and 451–480 (SGDTMLDNAMKSKDSKTIDFLLKNGAVSGK).

Belongs to the OspC family.

It localises to the secreted. The catalysed reaction is L-arginyl-[protein] + NAD(+) = ADP-riboxanated L-argininyl-[protein] + nicotinamide + NH4(+) + H(+). In terms of biological role, ADP-riboxanase effector that mediates arginine ADP-riboxanation of host caspases. ADP-riboxanation of host apoptotic caspases (CASP3 and CASP9) prevents their activation, thereby inhibiting host cell extrinsic and intrinsic apoptosis. Does not catalyze ADP-riboxanation of host CASP4/CASP11 or CASP8. In contrast to Ospc1 and OspC3, not able to inactivate host calmodulin. The chain is Arginine ADP-riboxanase OspC2 from Shigella flexneri.